The sequence spans 85 residues: Neurotoxin beta-KTx 17 (85 aa).

Residues 1-20 (MKQYIFFLALIVLVSTFAEA) form the signal peptide. Positions 21–37 (GKKTEILDKVKKVFSKG) are excised as a propeptide. Residues 49 to 85 (ELGCPFIEKWCEDHCESKKQVGKCENFDCSCVKLGGK) form the BetaSPN-type CS-alpha/beta domain. Cystine bridges form between cysteine 52-cysteine 72, cysteine 59-cysteine 77, and cysteine 63-cysteine 79.

It belongs to the long chain scorpion toxin family. Class 2 subfamily. In terms of tissue distribution, expressed by the venom gland.

It localises to the secreted. Has a very weak effect to block voltage-gated potassium channel Kv1.1/KCNA1. The protein is Neurotoxin beta-KTx 17 of Lychas mucronatus (Chinese swimming scorpion).